Consider the following 304-residue polypeptide: Homoserine kinase (304 aa).

ATP is bound at residue 90–100 (PLARGLGSSAS).

Belongs to the GHMP kinase family. Homoserine kinase subfamily.

The protein resides in the cytoplasm. It carries out the reaction L-homoserine + ATP = O-phospho-L-homoserine + ADP + H(+). It participates in amino-acid biosynthesis; L-threonine biosynthesis; L-threonine from L-aspartate: step 4/5. Functionally, catalyzes the ATP-dependent phosphorylation of L-homoserine to L-homoserine phosphate. In Staphylococcus aureus (strain MRSA252), this protein is Homoserine kinase.